A 174-amino-acid polypeptide reads, in one-letter code: Co-chaperone protein HscB homolog (174 aa).

Residues 2–74 enclose the J domain; the sequence is NYFELFSLLP…IQRAEHLLAL (73 aa).

The protein belongs to the HscB family. In terms of assembly, interacts with HscA and stimulates its ATPase activity.

In terms of biological role, co-chaperone involved in the maturation of iron-sulfur cluster-containing proteins. Seems to help targeting proteins to be folded toward HscA. In Shewanella pealeana (strain ATCC 700345 / ANG-SQ1), this protein is Co-chaperone protein HscB homolog.